Reading from the N-terminus, the 453-residue chain is Chromosomal replication initiator protein DnaA (453 aa).

A domain I, interacts with DnaA modulators region spans residues 1 to 76 (MSGDAAALWP…LAWRQQLPAV (76 aa)). Positions 76–115 (VRSVSVRGGVAATERAATLASVPLPTFDAPAAPAANPALL) are domain II. The tract at residues 116–333 (GFDPRLSFDR…GALNKLLAYA (218 aa)) is domain III, AAA+ region. Residues G160, G162, K163, and T164 each coordinate ATP. Residues 334-453 (ALTGARIDLM…IAAIRRSLNS (120 aa)) are domain IV, binds dsDNA.

Belongs to the DnaA family. Oligomerizes as a right-handed, spiral filament on DNA at oriC.

It is found in the cytoplasm. Functionally, plays an essential role in the initiation and regulation of chromosomal replication. ATP-DnaA binds to the origin of replication (oriC) to initiate formation of the DNA replication initiation complex once per cell cycle. Binds the DnaA box (a 9 base pair repeat at the origin) and separates the double-stranded (ds)DNA. Forms a right-handed helical filament on oriC DNA; dsDNA binds to the exterior of the filament while single-stranded (ss)DNA is stabiized in the filament's interior. The ATP-DnaA-oriC complex binds and stabilizes one strand of the AT-rich DNA unwinding element (DUE), permitting loading of DNA polymerase. After initiation quickly degrades to an ADP-DnaA complex that is not apt for DNA replication. Binds acidic phospholipids. This is Chromosomal replication initiator protein DnaA from Sphingopyxis alaskensis (strain DSM 13593 / LMG 18877 / RB2256) (Sphingomonas alaskensis).